The primary structure comprises 625 residues: Alpha-protein kinase vwkA (625 aa).

The span at 1 to 15 (MESKYVLSTEKESKT) shows a compositional bias: basic and acidic residues. The interval 1–64 (MESKYVLSTE…GLSSGGSKTH (64 aa)) is disordered. Polar residues-rich tracts occupy residues 25 to 39 (DMDS…TSLG) and 46 to 63 (SLKT…GSKT). Positions 87 to 114 (TKDSITLAKEKEKKIEKRNEEIKLTFKA) form a coiled coil. The 201-residue stretch at 122 to 322 (DLLFIVDCTG…KMNERIFISI (201 aa)) folds into the VWFA domain. The Alpha-type protein kinase domain maps to 386–600 (TCLSSSYEMK…HCKKLGLTIP (215 aa)). Residue 570–576 (GSCNLGK) participates in ATP binding. The interval 602 to 625 (FTSSSSTSSSSRSTSSSSSISYSY) is disordered.

This sequence belongs to the protein kinase superfamily. Alpha-type protein kinase family. ALPK subfamily. In terms of assembly, interacts with calmodulin; in the presence of calcium. In terms of processing, autophosphorylated, in vitro.

The protein localises to the cytoplasm. The protein resides in the cytosol. It localises to the perinuclear region. Its subcellular location is the contractile vacuole membrane. The catalysed reaction is L-seryl-[protein] + ATP = O-phospho-L-seryl-[protein] + ADP + H(+). It carries out the reaction L-threonyl-[protein] + ATP = O-phospho-L-threonyl-[protein] + ADP + H(+). Autophosphorylation activity enhanced by calcium/calmodulin. Displays a modest preference for threonine over serine residues. Does not phosphorylate myosin II, however can phosphorylate MBP, in vitro. May be involved in the regulation of myosin II function during cytokinesis. Overexpression leads to impaired cell proliferation in suspension culture and fails to develop beyond the mound stage. Both overexpression and absence of the gene can result in defects in cytokinesis and alterations in myosin II abundance and assembly. This is Alpha-protein kinase vwkA (vwkA) from Dictyostelium discoideum (Social amoeba).